We begin with the raw amino-acid sequence, 296 residues long: (+)-neomenthol dehydrogenase (296 aa).

An NADP(+)-binding site is contributed by 16 to 40 (RGIGFEICRQLASEGIRVVLTSRDE). A substrate-binding site is contributed by Ser-164. The active-site Proton acceptor is the Tyr-220.

The protein belongs to the short-chain dehydrogenases/reductases (SDR) family. In terms of assembly, monomer.

It is found in the cytoplasm. The enzyme catalyses (+)-neomenthol + NADP(+) = (1R,4S)-menthone + NADPH + H(+). Functionally, aldehyde reductase that catalyzes the reduction of the aldehyde carbonyl groups on saturated and alpha,beta-unsaturated aldehydes with more than 5 carbons. Involved in basal resistance against pathogens. The sequence is that of (+)-neomenthol dehydrogenase (SDR1) from Arabidopsis thaliana (Mouse-ear cress).